The following is a 315-amino-acid chain: Protein SHORT INTERNODES 1 (315 aa).

Residues 1 to 10 (MAGFPLGGGS) show a composition bias toward gly residues. Disordered regions lie at residues 1–24 (MAGF…PPVH) and 64–92 (PPAP…GGGG). Positions 70–82 (AGASSSSSSRGMR) are enriched in low complexity. The span at 83–92 (SSGGGGGGGG) shows a compositional bias: gly residues. Residues Cys-97, Cys-100, Cys-108, Cys-113, Cys-117, and Cys-124 each contribute to the Zn(2+) site. Residues 97–124 (CQDCGNQAKKDCTHMRCRTCCKSRGFAC) constitute a DNA-binding region (zn(2)-C6 fungal-type; degenerate). Low complexity-rich tracts occupy residues 143 to 156 (QQLA…AATA) and 172 to 182 (RPSATTPTTSS). Positions 143 to 186 (QQLAALAASAAATAGGAGPSRDPTKRPRARPSATTPTTSSGDQQ) are disordered. Positions 227–230 (IGGH) match the Required for homo- and heterodimerization motif.

The protein belongs to the SHI protein family. As to quaternary structure, forms homodimers (via C-terminus). Interacts with SPL14/IPA1 (via C-terminus). In terms of tissue distribution, predominantly expressed in axillary buds and young panicles.

It localises to the nucleus. In terms of biological role, regulates tillering and panicle branching by modulating SPL14/IPA1 transcriptional activity on the downstream TB1 and DEP1 target genes. Binds directly to the 5'-T/GCTCTAC-3' DNA motif found in the promoter regions of both TB1 and DEP1. Represses the DNA binding activity of SPL14/IPA1 toward the promoters of both TB1 and DEP1. Exhibits weak transcriptional activation activity in yeast cells. The sequence is that of Protein SHORT INTERNODES 1 from Oryza sativa subsp. japonica (Rice).